A 388-amino-acid polypeptide reads, in one-letter code: Salivary protein Tsal2A (388 aa).

The signal sequence occupies residues 1–18 (MSLLYGLLILAFTRSCLV). N260 carries an N-linked (GlcNAc...) asparagine glycan.

It belongs to the DNA/RNA non-specific endonuclease family. A divalent metal cation serves as cofactor. As to expression, saliva (at protein level).

It is found in the secreted. Functionally, binds double-stranded DNA (dsDNA) with high affinity. Binds double-stranded RNA. Binds single-stranded DNA with lower affinity and with a preference for purine-rich sequences. Shows residual nuclease activity for dsDNA. Facilitates blood meal intake by lowering the local viscosity created by the release of host DNA. The polypeptide is Salivary protein Tsal2A (Glossina morsitans morsitans (Savannah tsetse fly)).